We begin with the raw amino-acid sequence, 316 residues long: 4-diphosphocytidyl-2-C-methyl-D-erythritol kinase (316 aa).

Lys-23 is a catalytic residue. 108–118 contributes to the ATP binding site; that stretch reads PVAGGMAGGSA. The active site involves Asp-150.

This sequence belongs to the GHMP kinase family. IspE subfamily.

The enzyme catalyses 4-CDP-2-C-methyl-D-erythritol + ATP = 4-CDP-2-C-methyl-D-erythritol 2-phosphate + ADP + H(+). It participates in isoprenoid biosynthesis; isopentenyl diphosphate biosynthesis via DXP pathway; isopentenyl diphosphate from 1-deoxy-D-xylulose 5-phosphate: step 3/6. Catalyzes the phosphorylation of the position 2 hydroxy group of 4-diphosphocytidyl-2C-methyl-D-erythritol. The sequence is that of 4-diphosphocytidyl-2-C-methyl-D-erythritol kinase from Mycolicibacterium paratuberculosis (strain ATCC BAA-968 / K-10) (Mycobacterium paratuberculosis).